We begin with the raw amino-acid sequence, 188 residues long: Elongation factor P (188 aa).

This sequence belongs to the elongation factor P family.

Its subcellular location is the cytoplasm. The protein operates within protein biosynthesis; polypeptide chain elongation. Its function is as follows. Involved in peptide bond synthesis. Stimulates efficient translation and peptide-bond synthesis on native or reconstituted 70S ribosomes in vitro. Probably functions indirectly by altering the affinity of the ribosome for aminoacyl-tRNA, thus increasing their reactivity as acceptors for peptidyl transferase. This is Elongation factor P from Flavobacterium johnsoniae (strain ATCC 17061 / DSM 2064 / JCM 8514 / BCRC 14874 / CCUG 350202 / NBRC 14942 / NCIMB 11054 / UW101) (Cytophaga johnsonae).